The sequence spans 398 residues: Abhydrolase domain-containing protein 2 (398 aa).

The Cytoplasmic portion of the chain corresponds to 1-4; that stretch reads MSTA. The helical; Signal-anchor for type II membrane protein transmembrane segment at 5–22 threads the bilayer; that stretch reads FLTLIAVIVCILFRILNV. Over 23-398 the chain is Extracellular; that stretch reads HSQPLKPSVW…MMHEVGKVAP (376 aa). An AB hydrolase-1 domain is found at 113–365; it reads VAICPGIANS…HGGHLGFYEG (253 aa). Catalysis depends on charge relay system residues Ser192, Asp328, and His359.

This sequence belongs to the AB hydrolase superfamily. AB hydrolase 4 family.

It localises to the membrane. The polypeptide is Abhydrolase domain-containing protein 2 (Hydr2) (Drosophila melanogaster (Fruit fly)).